The sequence spans 352 residues: DNA ADP-ribosyl glycohydrolase (352 aa).

A Macro domain is found at 1-155 (MITYGSGDLL…IYPPSGGSRA (155 aa)). ADP-D-ribose is bound by residues 8 to 9 (DL), 20 to 22 (TVN), 31 to 34 (IALQ), and threonine 79. The active-site Nucleophile is lysine 80. ADP-D-ribose is bound at residue 117–121 (GVGNG). Residues 164–352 (MTWGRAVILE…VALDRILMTA (189 aa)) form an interaction with DarT region.

The protein belongs to the DarG ADP-ribosyl glycohydrolase family. In terms of assembly, interacts (via C-terminus) with cognate toxin DarT; this heterodimeric complex neutralizes the toxic effect of DarT by preventing ssDNA binding to DarT and consequently inactivating the toxin by direct protein-protein interactions.

The enzyme catalyses an N-(ADP-alpha-D-ribosyl)-thymidine in DNA + H2O = a thymidine in DNA + ADP-D-ribose. Antitoxin component of the hybrid type II/IV toxin-antitoxin (TA) system DarTG, which plays a crucial role in controlling bacterial growth and bacteriophage infection. De-ADP-ribosylates DNA (probably) modified on thymidine by its cognate toxin DarT, which neutralizes the activity of cognate toxin DarT. This is DNA ADP-ribosyl glycohydrolase from Mycobacterium bovis (strain BCG / Pasteur 1173P2).